We begin with the raw amino-acid sequence, 265 residues long: Deoxyribose-phosphate aldolase 2 (265 aa).

D108 acts as the Proton donor/acceptor in catalysis. K173 functions as the Schiff-base intermediate with acetaldehyde in the catalytic mechanism. The active-site Proton donor/acceptor is the K207.

This sequence belongs to the DeoC/FbaB aldolase family. DeoC type 2 subfamily.

The protein localises to the cytoplasm. It catalyses the reaction 2-deoxy-D-ribose 5-phosphate = D-glyceraldehyde 3-phosphate + acetaldehyde. Its pathway is carbohydrate degradation; 2-deoxy-D-ribose 1-phosphate degradation; D-glyceraldehyde 3-phosphate and acetaldehyde from 2-deoxy-alpha-D-ribose 1-phosphate: step 2/2. Catalyzes a reversible aldol reaction between acetaldehyde and D-glyceraldehyde 3-phosphate to generate 2-deoxy-D-ribose 5-phosphate. This is Deoxyribose-phosphate aldolase 2 (deoC2) from Yersinia pestis.